The sequence spans 232 residues: LexA repressor (232 aa).

Residues Met-1–Ala-10 are compositionally biased toward polar residues. The disordered stretch occupies residues Met-1–Ser-22. Positions Ile-47–Arg-67 form a DNA-binding region, H-T-H motif. Active-site for autocatalytic cleavage activity residues include Ser-156 and Lys-193.

Belongs to the peptidase S24 family. In terms of assembly, homodimer.

It carries out the reaction Hydrolysis of Ala-|-Gly bond in repressor LexA.. In terms of biological role, represses a number of genes involved in the response to DNA damage (SOS response), including recA and lexA. In the presence of single-stranded DNA, RecA interacts with LexA causing an autocatalytic cleavage which disrupts the DNA-binding part of LexA, leading to derepression of the SOS regulon and eventually DNA repair. The protein is LexA repressor of Mycolicibacterium paratuberculosis (strain ATCC BAA-968 / K-10) (Mycobacterium paratuberculosis).